A 114-amino-acid polypeptide reads, in one-letter code: T cell receptor alpha variable 12-3 (114 aa).

Residues 1–21 form the signal peptide; sequence MMKSLRVLLVILWLQLSWVWS. An Ig-like domain is found at 24–114; that stretch reads KEVEQDPGPL…DSATYLCAMS (91 aa). A glycan (N-linked (GlcNAc...) asparagine) is linked at N44. C45 and C111 form a disulfide bridge.

In terms of assembly, alpha-beta TR is a heterodimer composed of an alpha and beta chain; disulfide-linked. The alpha-beta TR is associated with the transmembrane signaling CD3 coreceptor proteins to form the TR-CD3 (TcR or TCR). The assembly of alpha-beta TR heterodimers with CD3 occurs in the endoplasmic reticulum where a single alpha-beta TR heterodimer associates with one CD3D-CD3E heterodimer, one CD3G-CD3E heterodimer and one CD247 homodimer forming a stable octameric structure. CD3D-CD3E and CD3G-CD3E heterodimers preferentially associate with TR alpha and TR beta chains, respectively. The association of the CD247 homodimer is the last step of TcR assembly in the endoplasmic reticulum and is required for transport to the cell surface.

The protein resides in the cell membrane. Its function is as follows. V region of the variable domain of T cell receptor (TR) alpha chain that participates in the antigen recognition. Alpha-beta T cell receptors are antigen specific receptors which are essential to the immune response and are present on the cell surface of T lymphocytes. Recognize peptide-major histocompatibility (MH) (pMH) complexes that are displayed by antigen presenting cells (APC), a prerequisite for efficient T cell adaptive immunity against pathogens. Binding of alpha-beta TR to pMH complex initiates TR-CD3 clustering on the cell surface and intracellular activation of LCK that phosphorylates the ITAM motifs of CD3G, CD3D, CD3E and CD247 enabling the recruitment of ZAP70. In turn ZAP70 phosphorylates LAT, which recruits numerous signaling molecules to form the LAT signalosome. The LAT signalosome propagates signal branching to three major signaling pathways, the calcium, the mitogen-activated protein kinase (MAPK) kinase and the nuclear factor NF-kappa-B (NF-kB) pathways, leading to the mobilization of transcription factors that are critical for gene expression and essential for T cell growth and differentiation. The T cell repertoire is generated in the thymus, by V-(D)-J rearrangement. This repertoire is then shaped by intrathymic selection events to generate a peripheral T cell pool of self-MH restricted, non-autoaggressive T cells. Post-thymic interaction of alpha-beta TR with the pMH complexes shapes TR structural and functional avidity. In Homo sapiens (Human), this protein is T cell receptor alpha variable 12-3.